A 507-amino-acid polypeptide reads, in one-letter code: ATP synthase subunit alpha, chloroplastic (507 aa).

An ATP-binding site is contributed by 170-177 (GDRQTGKT).

The protein belongs to the ATPase alpha/beta chains family. F-type ATPases have 2 components, CF(1) - the catalytic core - and CF(0) - the membrane proton channel. CF(1) has five subunits: alpha(3), beta(3), gamma(1), delta(1), epsilon(1). CF(0) has four main subunits: a, b, b' and c.

The protein resides in the plastid. It localises to the chloroplast thylakoid membrane. The catalysed reaction is ATP + H2O + 4 H(+)(in) = ADP + phosphate + 5 H(+)(out). Functionally, produces ATP from ADP in the presence of a proton gradient across the membrane. The alpha chain is a regulatory subunit. In Panax ginseng (Korean ginseng), this protein is ATP synthase subunit alpha, chloroplastic.